A 98-amino-acid chain; its full sequence is MVKKAHSFRRKTRGKLSKHPRRRGLPPLTRFLQEFEVGQKVHIVIEPSYHRGMPDPRFHGRTGTVVGKRGDAYIVEIKDGGKVKTFFIHPVHLRPQKG.

Residues 1–24 (MVKKAHSFRRKTRGKLSKHPRRRG) show a composition bias toward basic residues. Residues 1–27 (MVKKAHSFRRKTRGKLSKHPRRRGLPP) form a disordered region.

The protein belongs to the eukaryotic ribosomal protein eL21 family.

This is Large ribosomal subunit protein eL21 from Thermococcus gammatolerans (strain DSM 15229 / JCM 11827 / EJ3).